Reading from the N-terminus, the 617-residue chain is 5-hydroxytryptamine receptor 2B (617 aa).

Residues 1–95 are Extracellular-facing; sequence MLKTVTTAMA…LLVKMIAMAV (95 aa). N-linked (GlcNAc...) asparagine glycosylation is found at Asn31, Asn41, Asn51, and Asn58. Residues 96 to 116 traverse the membrane as a helical segment; that stretch reads VLGLMILVTIIGNVFVIAAII. The Cytoplasmic portion of the chain corresponds to 117–128; the sequence is LERNLQNVANYL. Residues 129–149 form a helical membrane-spanning segment; the sequence is VASLAVADLFVACLVMPLGAV. The Extracellular portion of the chain corresponds to 150–164; it reads YEISNGWILGPELCD. Cys163 and Cys242 are oxidised to a cystine. Residues 165-185 form a helical membrane-spanning segment; it reads IWTSCDVLCCTASILHLVAIA. Topologically, residues 186 to 205 are cytoplasmic; the sequence is ADRYWTVTNIDYNNLRTPRR. Residues 206–226 form a helical membrane-spanning segment; the sequence is VFLMIFCVWFAALIVSLAPQF. The Extracellular portion of the chain corresponds to 227–256; that stretch reads GWKDPDYMKRIEEQHCMVSQDVGYQIFATC. A helical membrane pass occupies residues 257–277; that stretch reads CTFYVPLLVILFLYWKIYIIA. The Cytoplasmic portion of the chain corresponds to 278 to 534; sequence RKRIQRRAQK…EAKRERKAAQ (257 aa). The tract at residues 309–336 is disordered; that stretch reads RSKRRAERKRLEAGERTPVDGDGTGGQL. Over residues 317–327 the composition is skewed to basic and acidic residues; it reads KRLEAGERTPV. The chain crosses the membrane as a helical span at residues 535 to 555; that stretch reads TLAIITGAFVICWLPFFVMAL. The Extracellular segment spans residues 556–570; that stretch reads TMSLCKECEIHTAVA. A helical membrane pass occupies residues 571-591; it reads SLFLWLGYFNSTLNPVIYTIF. Residues 592–617 lie on the Cytoplasmic side of the membrane; the sequence is NPEFRRAFKRILFGRKAAARARSAKI.

This sequence belongs to the G-protein coupled receptor 1 family.

It is found in the cell membrane. In terms of biological role, this is one of the several different receptors for 5-hydroxytryptamine (serotonin), a biogenic hormone that functions as a neurotransmitter, a hormone, and a mitogen. The activity of this receptor is mediated by G proteins which inhibit adenylate cyclase. The protein is 5-hydroxytryptamine receptor 2B (5-HT1B) of Drosophila melanogaster (Fruit fly).